A 256-amino-acid polypeptide reads, in one-letter code: Post-translational flagellin modification protein A (256 aa).

Ser145 contacts substrate. Catalysis depends on Tyr168, which acts as the Proton acceptor.

Belongs to the short-chain dehydrogenases/reductases (SDR) family.

Its function is as follows. Required for biosynthesis of LAH modification in the post-translational modification of Campylobacter coli flagellin. The protein is Post-translational flagellin modification protein A (ptmA) of Campylobacter coli.